We begin with the raw amino-acid sequence, 901 residues long: HTH-type transcriptional regulator MalT (901 aa).

39 to 46 contributes to the ATP binding site; it reads SPAGYGKT. The 66-residue stretch at 829 to 894 folds into the HTH luxR-type domain; that stretch reads ELIRTSPLTQ…AAVQHAQKLL (66 aa). Residues 853–872 constitute a DNA-binding region (H-T-H motif); it reads NEQIAGELEVAATTIKTHIR.

The protein belongs to the MalT family. Monomer in solution. Oligomerizes to an active state in the presence of the positive effectors ATP and maltotriose.

With respect to regulation, activated by ATP and maltotriose, which are both required for DNA binding. Its function is as follows. Positively regulates the transcription of the maltose regulon whose gene products are responsible for uptake and catabolism of malto-oligosaccharides. Specifically binds to the promoter region of its target genes, recognizing a short DNA motif called the MalT box. The chain is HTH-type transcriptional regulator MalT from Escherichia coli O7:K1 (strain IAI39 / ExPEC).